The primary structure comprises 401 residues: Formate-dependent phosphoribosylglycinamide formyltransferase (401 aa).

Residues 22-23 (EL) and Glu-82 contribute to the N(1)-(5-phospho-beta-D-ribosyl)glycinamide site. Residues Arg-115, Lys-157, 162 to 167 (SSGKGQ), 197 to 200 (EGFV), and Glu-205 each bind ATP. An ATP-grasp domain is found at 120 to 315 (RLAAETLALP…EFELHARAIL (196 aa)). Mg(2+) contacts are provided by Glu-274 and Glu-286. N(1)-(5-phospho-beta-D-ribosyl)glycinamide contacts are provided by residues Asp-293, Lys-362, and 369–370 (RR).

This sequence belongs to the PurK/PurT family. As to quaternary structure, homodimer.

The enzyme catalyses N(1)-(5-phospho-beta-D-ribosyl)glycinamide + formate + ATP = N(2)-formyl-N(1)-(5-phospho-beta-D-ribosyl)glycinamide + ADP + phosphate + H(+). It participates in purine metabolism; IMP biosynthesis via de novo pathway; N(2)-formyl-N(1)-(5-phospho-D-ribosyl)glycinamide from N(1)-(5-phospho-D-ribosyl)glycinamide (formate route): step 1/1. Involved in the de novo purine biosynthesis. Catalyzes the transfer of formate to 5-phospho-ribosyl-glycinamide (GAR), producing 5-phospho-ribosyl-N-formylglycinamide (FGAR). Formate is provided by PurU via hydrolysis of 10-formyl-tetrahydrofolate. This is Formate-dependent phosphoribosylglycinamide formyltransferase from Polaromonas naphthalenivorans (strain CJ2).